We begin with the raw amino-acid sequence, 306 residues long: Recombination-associated protein RdgC (306 aa).

The protein belongs to the RdgC family.

The protein localises to the cytoplasm. It localises to the nucleoid. In terms of biological role, may be involved in recombination. This is Recombination-associated protein RdgC from Pseudomonas aeruginosa (strain LESB58).